We begin with the raw amino-acid sequence, 362 residues long: Atypical chemokine receptor 3 (362 aa).

Topologically, residues 1–40 (MDLHLFDYAEPGNFSDISWPCNSSDCIVVDTVLCPNMPNK) are extracellular. Residues Asn13, Asn22, and Asn39 are each glycosylated (N-linked (GlcNAc...) asparagine). Residues 41 to 61 (SVLLYTLSFIYIFIFVIGMIA) form a helical membrane-spanning segment. Residues 62-81 (NSVVVWVNIQAKTTGYDTHC) lie on the Cytoplasmic side of the membrane. A helical transmembrane segment spans residues 82–102 (YILNLAIADLWVVVTIPVWVV). Residues 103–118 (SLVQHNQWPMGELTCK) lie on the Extracellular side of the membrane. Residues Cys117 and Cys196 are joined by a disulfide bond. Residues 119–139 (ITHLIFSINLFGSIFFLTCMS) traverse the membrane as a helical segment. Topologically, residues 140-162 (VDRYLSITYFASTSSRRKKVVRR) are cytoplasmic. Residues 163–183 (AVCVLVWLLAFCVSLPDTYYL) traverse the membrane as a helical segment. The Extracellular segment spans residues 184–213 (KTVTSASNNETYCRSFYPEHSVKEWLISME). Residues 214–234 (LVSVVLGFAIPFCVIAVFYCL) traverse the membrane as a helical segment. The Cytoplasmic portion of the chain corresponds to 235–252 (LARAISASSDQEKQSSRK). A helical transmembrane segment spans residues 253–273 (IIFSYVVVFLVCWLPYHVVVL). The Extracellular segment spans residues 274–296 (LDIFSILHYIPFTCQLENFLFTA). A helical membrane pass occupies residues 297 to 319 (LHVTQCLSLVHCCVNPVLYSFIN). Topologically, residues 320 to 362 (RNYRYELMKAFIFKYSAKTGLTKLIDASRVSETEYSALEQNAK) are cytoplasmic. Residues 324–362 (YELMKAFIFKYSAKTGLTKLIDASRVSETEYSALEQNAK) are C-terminal cytoplasmic tail. Ser347, Ser350, and Ser355 each carry phosphoserine.

The protein belongs to the G-protein coupled receptor 1 family. Atypical chemokine receptor subfamily. Homodimer. Can form heterodimers with CXCR4; heterodimerization may regulate CXCR4 signaling activity. Interacts with ARRB1 and ARRB2. Post-translationally, the Ser/Thr residues in the C-terminal cytoplasmic tail may be phosphorylated. Ubiquitinated at the Lys residues in its C-terminal cytoplasmic tail and is essential for correct trafficking from and to the cell membrane. Deubiquitinated by CXCL12-stimulation in a reversible manner.

Its subcellular location is the cell membrane. It is found in the early endosome. The protein localises to the recycling endosome. In terms of biological role, atypical chemokine receptor that controls chemokine levels and localization via high-affinity chemokine binding that is uncoupled from classic ligand-driven signal transduction cascades, resulting instead in chemokine sequestration, degradation, or transcytosis. Also known as interceptor (internalizing receptor) or chemokine-scavenging receptor or chemokine decoy receptor. Acts as a receptor for chemokines CXCL11 and CXCL12/SDF1. Chemokine binding does not activate G-protein-mediated signal transduction but instead induces beta-arrestin recruitment, leading to ligand internalization and activation of MAPK signaling pathway. Required for regulation of CXCR4 protein levels in migrating interneurons, thereby adapting their chemokine responsiveness. In glioma cells, transduces signals via MEK/ERK pathway, mediating resistance to apoptosis. Promotes cell growth and survival. Not involved in cell migration, adhesion or proliferation of normal hematopoietic progenitors but activated by CXCL11 in malignant hemapoietic cells, leading to phosphorylation of ERK1/2 (MAPK3/MAPK1) and enhanced cell adhesion and migration. Plays a regulatory role in CXCR4-mediated activation of cell surface integrins by CXCL12. Required for heart valve development. Regulates axon guidance in the oculomotor system through the regulation of CXCL12 levels. The sequence is that of Atypical chemokine receptor 3 (ACKR3) from Canis lupus familiaris (Dog).